The primary structure comprises 419 residues: WD repeat-containing protein JIP5 (419 aa).

7 WD repeats span residues 4–45, 66–105, 108–147, 180–220, 224–263, 268–308, and 351–390; these read ALSS…HNQS, PSHKSCRGVAFDASGSNLFCIFKDKSIIALDPSDGHVKAR, RAHESAPSRILPIHEGLMATGDDDGIVRLWDPRCPPEGDA, DQED…KGVE, DQEDELLSIASIKNGKKLVVGTQLGVLSLWAPDRGLLDHA, GHPS…GIVG, and DAAEPEPAVMLVSDEAHLIARSADGSDESAGESDVMQPPP. A disordered region spans residues 172-192; sequence DPPRSKKKDQEDDLKRKRDEE. Positions 372–408 are disordered; the sequence is SADGSDESAGESDVMQPPPATKRRTAKSKAGKKSVHD. Residues 392–404 show a composition bias toward basic residues; sequence TKRRTAKSKAGKK.

It belongs to the WD repeat WDR55 family.

It is found in the nucleus. The protein localises to the nucleolus. The sequence is that of WD repeat-containing protein JIP5 (JIP5) from Malassezia globosa (strain ATCC MYA-4612 / CBS 7966) (Dandruff-associated fungus).